The following is a 471-amino-acid chain: Vanillate/3-O-methylgallate O-demethylase (471 aa).

Tyr-31 contacts substrate. Gln-57 is a (6S)-5,6,7,8-tetrahydrofolate binding site. A substrate-binding site is contributed by His-60. (6S)-5,6,7,8-tetrahydrofolate is bound by residues Gln-93 and Val-120. Arg-122 provides a ligand contact to substrate. (6S)-5,6,7,8-tetrahydrofolate is bound by residues Gln-165 and Glu-215. 247–250 lines the substrate pocket; sequence YPSN. Trp-256 lines the (6S)-5,6,7,8-tetrahydrofolate pocket.

Belongs to the GcvT family. Homodimer.

The catalysed reaction is vanillate + (6S)-5,6,7,8-tetrahydrofolate = (6S)-5-methyl-5,6,7,8-tetrahydrofolate + 3,4-dihydroxybenzoate. It carries out the reaction 3-O-methylgallate + (6S)-5,6,7,8-tetrahydrofolate = 3,4,5-trihydroxybenzoate + (6S)-5-methyl-5,6,7,8-tetrahydrofolate. It functions in the pathway secondary metabolite metabolism; lignin degradation. Involved in the catabolism of vanillate and syringate. Catalyzes the transfer of a methyl moiety from vanillate or 3-O-methylgallate (3MGA) to tetrahydrofolate, forming protocatechuate (PCA) or gallate, respectively, and methyl-tetrahydrofolate. Has similar activities with both substrates. Cannot use syringate. Uses an ordered, sequential kinetic mechanism. The polypeptide is Vanillate/3-O-methylgallate O-demethylase (Sphingobium sp. (strain NBRC 103272 / SYK-6)).